The primary structure comprises 487 residues: Serralysin (487 aa).

The propeptide occupies 1–16 (MQSTKKAIEITESSLA). Residue histidine 192 coordinates Zn(2+). Glutamate 193 is a catalytic residue. 3 residues coordinate Zn(2+): histidine 196, histidine 202, and tyrosine 232. The Ca(2+) site is built by arginine 269, glycine 271, threonine 273, aspartate 301, glycine 303, glycine 304, aspartate 306, threonine 343, glutamate 345, glycine 350, glycine 352, aspartate 354, asparagine 359, alanine 361, asparagine 363, glycine 367, glycine 368, alanine 369, glycine 370, aspartate 372, glycine 376, glycine 377, glycine 378, glycine 379, aspartate 381, glycine 385, glycine 386, alanine 387, glycine 388, aspartate 390, aspartate 399, aspartate 406, and aspartate 416. 2 Hemolysin-type calcium-binding repeats span residues 348-365 (IGGS…NNVL) and 366-383 (KGGA…ADEL).

The protein belongs to the peptidase M10B family. Ca(2+) serves as cofactor. Requires Zn(2+) as cofactor.

It is found in the secreted. It carries out the reaction Preferential cleavage of bonds with hydrophobic residues in P1'.. Its function is as follows. Has insecticidal activity against the locust M.palpalis. When administered orally to locusts at a low dose it causes them to lie on their sides exhibiting sporadic limb movements and muscular twitching, followed by full recovery. When administered at higher doses the same symptoms are observed, followed by death. The sequence is that of Serralysin from Serratia marcescens.